The following is a 493-amino-acid chain: Glutamyl-tRNA(Gln) amidotransferase subunit A (493 aa).

Active-site charge relay system residues include K79 and S159. The Acyl-ester intermediate role is filled by S183.

The protein belongs to the amidase family. GatA subfamily. Heterotrimer of A, B and C subunits.

It carries out the reaction L-glutamyl-tRNA(Gln) + L-glutamine + ATP + H2O = L-glutaminyl-tRNA(Gln) + L-glutamate + ADP + phosphate + H(+). Allows the formation of correctly charged Gln-tRNA(Gln) through the transamidation of misacylated Glu-tRNA(Gln) in organisms which lack glutaminyl-tRNA synthetase. The reaction takes place in the presence of glutamine and ATP through an activated gamma-phospho-Glu-tRNA(Gln). The sequence is that of Glutamyl-tRNA(Gln) amidotransferase subunit A from Brucella abortus (strain S19).